Consider the following 337-residue polypeptide: Porphobilinogen deaminase (337 aa).

The residue at position 254 (C254) is an S-(dipyrrolylmethanemethyl)cysteine.

Belongs to the HMBS family. Dipyrromethane serves as cofactor.

It carries out the reaction 4 porphobilinogen + H2O = hydroxymethylbilane + 4 NH4(+). It functions in the pathway porphyrin-containing compound metabolism; protoporphyrin-IX biosynthesis; coproporphyrinogen-III from 5-aminolevulinate: step 2/4. Its function is as follows. Tetrapolymerization of the monopyrrole PBG into the hydroxymethylbilane pre-uroporphyrinogen in several discrete steps. The protein is Porphobilinogen deaminase (pda-1) of Neurospora crassa (strain ATCC 24698 / 74-OR23-1A / CBS 708.71 / DSM 1257 / FGSC 987).